Consider the following 323-residue polypeptide: Acetyl-coenzyme A carboxylase carboxyl transferase subunit alpha (323 aa).

The CoA carboxyltransferase C-terminal domain maps to R39 to Q293.

The protein belongs to the AccA family. As to quaternary structure, acetyl-CoA carboxylase is a heterohexamer composed of biotin carboxyl carrier protein (AccB), biotin carboxylase (AccC) and two subunits each of ACCase subunit alpha (AccA) and ACCase subunit beta (AccD).

The protein resides in the cytoplasm. The catalysed reaction is N(6)-carboxybiotinyl-L-lysyl-[protein] + acetyl-CoA = N(6)-biotinyl-L-lysyl-[protein] + malonyl-CoA. It participates in lipid metabolism; malonyl-CoA biosynthesis; malonyl-CoA from acetyl-CoA: step 1/1. Its function is as follows. Component of the acetyl coenzyme A carboxylase (ACC) complex. First, biotin carboxylase catalyzes the carboxylation of biotin on its carrier protein (BCCP) and then the CO(2) group is transferred by the carboxyltransferase to acetyl-CoA to form malonyl-CoA. The polypeptide is Acetyl-coenzyme A carboxylase carboxyl transferase subunit alpha (Burkholderia pseudomallei (strain 1106a)).